A 358-amino-acid polypeptide reads, in one-letter code: uncharacterized protein (358 aa).

Position 207–214 (207–214 (AAVKDGKT)) interacts with ATP.

This is an uncharacterized protein from Bacillus subtilis (strain 168).